Consider the following 500-residue polypeptide: Maturase K (500 aa).

It belongs to the intron maturase 2 family. MatK subfamily.

It localises to the plastid. The protein localises to the chloroplast. Usually encoded in the trnK tRNA gene intron. Probably assists in splicing its own and other chloroplast group II introns. This is Maturase K from Helianthus annuus (Common sunflower).